Here is a 313-residue protein sequence, read N- to C-terminus: 1-phosphofructokinase (313 aa).

ATP contacts are provided by residues 222–227 (SMGAKG) and 254–255 (GD). Catalysis depends on D255, which acts as the Proton acceptor.

It belongs to the carbohydrate kinase PfkB family.

It catalyses the reaction beta-D-fructose 1-phosphate + ATP = beta-D-fructose 1,6-bisphosphate + ADP + H(+). Functionally, catalyzes the ATP-dependent phosphorylation of fructose-l-phosphate to fructose-l,6-bisphosphate. This Haemophilus influenzae (strain ATCC 51907 / DSM 11121 / KW20 / Rd) protein is 1-phosphofructokinase (fruK).